The chain runs to 514 residues: MMTTANAPQANRALKTKDTSQADTKLSALFAARHDEQNLQSPYDIGLIIVALALMTIGIIIVTSASMPVAERIHDNPFYFAIRHGIYIVGAIIAAMVVLELPMQFWRTANPYLLLAAIGLLVAVLLVGRTVNGSTRWLALGPITIQAAEPAKLFFFTYLAGYLVRRYEEVTENLKGFIKPLVVFFALAMLLLLQPDLGTVVVMFATTIGLLFLAGARLWQFFALVFAGVLAVVALIVFEEYRMKRVTSFLDPWADPFGAGYQLTQSLMAYGRGNWFGQGLGNSLQKLEFLPEAHTDFVMAILAEELGFVGVLAVLGLILWMVVRALQIGNKALLKSRPFEGYLAYSVGIWFSFQTAVNIGASAGILPTKGLTLPLVSYGGSSLIVMSVAVALLLRIDFELRVDGVQALGRGDNKRTSKAKAKPSAKSAAKPAVRTKHTNAEPFADAEADYNQAPDLKASDVNAPDMHESSEDAPVAKTKDAGSKKASNTVSPEDEGKAGIKAILARVSKEASSE.

The next 9 helical transmembrane spans lie at 45–65 (IGLI…VTSA), 86–106 (IYIV…MQFW), 108–128 (TANP…LLVG), 137–157 (WLAL…FFFT), 182–202 (VVFF…TVVV), 218–238 (LWQF…LIVF), 301–321 (ILAE…ILWM), 347–367 (VGIW…GILP), and 373–393 (LPLV…VALL). Disordered stretches follow at residues 411 to 437 (GDNK…RTKH) and 449 to 501 (DYNQ…AGIK).

The protein belongs to the SEDS family. FtsW subfamily.

It is found in the cell inner membrane. It carries out the reaction [GlcNAc-(1-&gt;4)-Mur2Ac(oyl-L-Ala-gamma-D-Glu-L-Lys-D-Ala-D-Ala)](n)-di-trans,octa-cis-undecaprenyl diphosphate + beta-D-GlcNAc-(1-&gt;4)-Mur2Ac(oyl-L-Ala-gamma-D-Glu-L-Lys-D-Ala-D-Ala)-di-trans,octa-cis-undecaprenyl diphosphate = [GlcNAc-(1-&gt;4)-Mur2Ac(oyl-L-Ala-gamma-D-Glu-L-Lys-D-Ala-D-Ala)](n+1)-di-trans,octa-cis-undecaprenyl diphosphate + di-trans,octa-cis-undecaprenyl diphosphate + H(+). The protein operates within cell wall biogenesis; peptidoglycan biosynthesis. Peptidoglycan polymerase that is essential for cell division. The chain is Probable peptidoglycan glycosyltransferase FtsW from Alteromonas naphthalenivorans.